Here is a 315-residue protein sequence, read N- to C-terminus: Phosphatidylglycerol--prolipoprotein diacylglyceryl transferase (315 aa).

The next 2 membrane-spanning stretches (helical) occupy residues 19 to 39 and 93 to 113; these read FTIH…VWIL and VWEG…VAFL. A 1,2-diacyl-sn-glycero-3-phospho-(1'-sn-glycerol) is bound at residue R141. The next 2 membrane-spanning stretches (helical) occupy residues 188–208 and 256–276; these read LFHP…ALII and MWTA…LYQY.

This sequence belongs to the Lgt family.

The protein resides in the cell membrane. It catalyses the reaction L-cysteinyl-[prolipoprotein] + a 1,2-diacyl-sn-glycero-3-phospho-(1'-sn-glycerol) = an S-1,2-diacyl-sn-glyceryl-L-cysteinyl-[prolipoprotein] + sn-glycerol 1-phosphate + H(+). It participates in protein modification; lipoprotein biosynthesis (diacylglyceryl transfer). Its function is as follows. Catalyzes the transfer of the diacylglyceryl group from phosphatidylglycerol to the sulfhydryl group of the N-terminal cysteine of a prolipoprotein, the first step in the formation of mature lipoproteins. The polypeptide is Phosphatidylglycerol--prolipoprotein diacylglyceryl transferase (Bifidobacterium longum subsp. infantis (strain ATCC 15697 / DSM 20088 / JCM 1222 / NCTC 11817 / S12)).